Consider the following 239-residue polypeptide: Ribonuclease PH (239 aa).

Residues R86 and 124–126 each bind phosphate; that span reads GTR.

This sequence belongs to the RNase PH family. Homohexameric ring arranged as a trimer of dimers.

It catalyses the reaction tRNA(n+1) + phosphate = tRNA(n) + a ribonucleoside 5'-diphosphate. Phosphorolytic 3'-5' exoribonuclease that plays an important role in tRNA 3'-end maturation. Removes nucleotide residues following the 3'-CCA terminus of tRNAs; can also add nucleotides to the ends of RNA molecules by using nucleoside diphosphates as substrates, but this may not be physiologically important. Probably plays a role in initiation of 16S rRNA degradation (leading to ribosome degradation) during starvation. The chain is Ribonuclease PH from Rickettsia bellii (strain RML369-C).